A 600-amino-acid chain; its full sequence is DDB1- and CUL4-associated factor 15 (600 aa).

The interval 1–29 (MAPSSKSERNSGAGSAGGGPGGTGGKRAV) is disordered. Residues 14–27 (GSAGGGPGGTGGKR) are compositionally biased toward gly residues. Position 50 is a phosphoserine (Ser-50). Cys-193, Cys-196, Cys-211, and His-214 together coordinate Zn(2+). Phosphoserine is present on Ser-314. Residues 334-343 (AKGSPLEETR) are compositionally biased toward basic and acidic residues. Positions 334–384 (AKGSPLEETRLPSSLGPSSSRCRPSLEPQAPSGEVVPRDSPPAAETTAPEP) are disordered. Low complexity-rich tracts occupy residues 344–359 (LPSSLGPSSSRCRPSL) and 374–384 (PPAAETTAPEP).

As to quaternary structure, component of the DCX(DCAF15) complex, also named CLR4(DCAF15) complex, composed of DCAF15, DDB1, cullin-4 (CUL4A or CUL4B), DDA1 and RBX1.

It participates in protein modification; protein ubiquitination. Its function is as follows. Substrate-recognition component of the DCX(DCAF15) complex, a cullin-4-RING E3 ubiquitin-protein ligase complex that mediates ubiquitination and degradation of target proteins. The DCX(DCAF15) complex acts as a regulator of the natural killer (NK) cells effector functions, possibly by mediating ubiquitination and degradation of cohesin subunits SMC1A and SMC3. May play a role in the activation of antigen-presenting cells (APC) and their interaction with NK cells. This chain is DDB1- and CUL4-associated factor 15, found in Mus musculus (Mouse).